The primary structure comprises 61 residues: Large ribosomal subunit protein bL32 (61 aa).

It belongs to the bacterial ribosomal protein bL32 family.

The polypeptide is Large ribosomal subunit protein bL32 (Ehrlichia chaffeensis (strain ATCC CRL-10679 / Arkansas)).